A 673-amino-acid chain; its full sequence is DNA ligase (673 aa).

Residues 35 to 39 (DAQYD), 84 to 85 (SL), and Glu-115 contribute to the NAD(+) site. Catalysis depends on Lys-117, which acts as the N6-AMP-lysine intermediate. NAD(+) contacts are provided by Arg-138, Glu-178, Lys-294, and Lys-318. 4 residues coordinate Zn(2+): Cys-412, Cys-415, Cys-430, and Cys-435. The region spanning 594-673 (LQSDRLAGKS…DELHALLVDE (80 aa)) is the BRCT domain.

It belongs to the NAD-dependent DNA ligase family. LigA subfamily. Mg(2+) is required as a cofactor. Requires Mn(2+) as cofactor.

The enzyme catalyses NAD(+) + (deoxyribonucleotide)n-3'-hydroxyl + 5'-phospho-(deoxyribonucleotide)m = (deoxyribonucleotide)n+m + AMP + beta-nicotinamide D-nucleotide.. Its function is as follows. DNA ligase that catalyzes the formation of phosphodiester linkages between 5'-phosphoryl and 3'-hydroxyl groups in double-stranded DNA using NAD as a coenzyme and as the energy source for the reaction. It is essential for DNA replication and repair of damaged DNA. This chain is DNA ligase, found in Herpetosiphon aurantiacus (strain ATCC 23779 / DSM 785 / 114-95).